The chain runs to 105 residues: Small ribosomal subunit protein uS10 (105 aa).

This sequence belongs to the universal ribosomal protein uS10 family. As to quaternary structure, part of the 30S ribosomal subunit.

In terms of biological role, involved in the binding of tRNA to the ribosomes. In Synechococcus sp. (strain JA-2-3B'a(2-13)) (Cyanobacteria bacterium Yellowstone B-Prime), this protein is Small ribosomal subunit protein uS10.